We begin with the raw amino-acid sequence, 313 residues long: Competence protein ComGA (313 aa).

138–145 provides a ligand contact to ATP; sequence GPVGSGKT.

Belongs to the GSP E family.

The protein localises to the cell membrane. In terms of biological role, required for uptake of DNA by competent cells. May be involved in assembly of a complex forming a transformation pilus at the surface of competent cells. This Streptococcus pneumoniae (strain ATCC BAA-255 / R6) protein is Competence protein ComGA.